A 49-amino-acid polypeptide reads, in one-letter code: QLINGQGAPAPYPDPLEPKREVCELNPDCDELADQVGLQDAYQRFYGPV.

Gln1 carries the pyrrolidone carboxylic acid modification. The Gla domain occupies 1-47; the sequence is QLINGQGAPAPYPDPLEPKREVCELNPDCDELADQVGLQDAYQRFYG. 4-hydroxyproline is present on Pro9. Ca(2+) is bound by residues Glu17, Glu21, Glu24, and Asp30. A 4-carboxyglutamate mark is found at Glu17, Glu21, and Glu24. A disulfide bridge links Cys23 with Cys29.

The protein belongs to the osteocalcin/matrix Gla protein family. Post-translationally, gamma-carboxyglutamate residues are formed by vitamin K dependent carboxylation by GGCX. These residues are essential for the binding of calcium. Decarboxylation promotes the hormone activity.

The protein localises to the secreted. In terms of biological role, the carboxylated form is one of the main organic components of the bone matrix, which constitutes 1-2% of the total bone protein: it acts as a negative regulator of bone formation and is required to limit bone formation without impairing bone resorption or mineralization. The carboxylated form binds strongly to apatite and calcium. The uncarboxylated form acts as a hormone secreted by osteoblasts, which regulates different cellular processes, such as energy metabolism, male fertility and brain development. Regulates of energy metabolism by acting as a hormone favoring pancreatic beta-cell proliferation, insulin secretion and sensitivity and energy expenditure. Uncarboxylated osteocalcin hormone also promotes testosterone production in the testes: acts as a ligand for G protein-coupled receptor GPRC6A at the surface of Leydig cells, initiating a signaling response that promotes the expression of enzymes required for testosterone synthesis in a CREB-dependent manner. Also acts as a regulator of brain development: osteocalcin hormone crosses the blood-brain barrier and acts as a ligand for GPR158 on neurons, initiating a signaling response that prevents neuronal apoptosis in the hippocampus, favors the synthesis of all monoamine neurotransmitters and inhibits that of gamma-aminobutyric acid (GABA). Osteocalcin also crosses the placenta during pregnancy and maternal osteocalcin is required for fetal brain development. In Oryctolagus cuniculus (Rabbit), this protein is Osteocalcin (BGLAP).